Here is a 637-residue protein sequence, read N- to C-terminus: Interleukin-17 receptor E (637 aa).

Positions 1–24 (MGSPRLAALLLSQPLLFICLAVSA) are cleaved as a signal peptide. Residues 25–415 (QVACPCLPRW…LCPDVSHRHL (391 aa)) lie on the Extracellular side of the membrane. N-linked (GlcNAc...) asparagine glycosylation is found at asparagine 278 and asparagine 307. The helical transmembrane segment at 416 to 436 (GLLILALLGLTTLLGVVLVLF) threads the bilayer. The Cytoplasmic portion of the chain corresponds to 437–637 (CRRLLPGPGR…TNSPCGFSCL (201 aa)). Residues 447 to 583 (TRPVLLLHAA…LLRDLPRLLR (137 aa)) form the SEFIR domain.

Forms heterodimers with IL17RE; the heterodimer binds IL17C.

The protein localises to the cell membrane. In terms of biological role, specific functional receptor for IL17C, signaling through the NF-kappa-B and MAPK pathways. Requires TRAF3IP2 /ACT1 for signaling. Crucial regulator in innate immunity to bacterial pathogens. The polypeptide is Interleukin-17 receptor E (Il17re) (Rattus norvegicus (Rat)).